A 410-amino-acid polypeptide reads, in one-letter code: Magnesium transporter NIPA3 (410 aa).

At 1-67 (MGAQVRLPPG…ISANVENKYS (67 aa)) the chain is on the extracellular side. 4 N-linked (GlcNAc...) asparagine glycosylation sites follow: asparagine 25, asparagine 35, asparagine 50, and asparagine 55. The helical transmembrane segment at 68-88 (LYVGLVLAVSSSIFIGSSFIL) threads the bilayer. Residues 89-114 (KKKGLLQLASKGFTRAGQGGHSYLKE) are Cytoplasmic-facing. Residues 115–135 (WLWWVGLLSMGAGEAANFAAY) form a helical membrane-spanning segment. Residue alanine 136 is a topological domain, extracellular. Residues 137–157 (FAPATLVTPLGALSVLISAIL) form a helical membrane-spanning segment. Residues 158–165 (SSYFLNEH) are Cytoplasmic-facing. A helical membrane pass occupies residues 166-186 (LNIHGKIGCILSILGSTVMVI). Residues 187–207 (HAPQEEEVTSLHEMEMKLRDP) are Extracellular-facing. A helical membrane pass occupies residues 208-228 (GFISFAVIITVISLVLILIVA). The Cytoplasmic portion of the chain corresponds to 229-233 (PKKGQ). A helical membrane pass occupies residues 234–254 (TNILVYISICSLIGAFSVSSV). Residues 255–273 (KGLGIAIKELIEWKPVYKH) lie on the Extracellular side of the membrane. Residues 274–294 (PLVFVLLAVLVLSVTTQINYL) traverse the membrane as a helical segment. Residues 295 to 305 (NKALDTFNTSL) lie on the Cytoplasmic side of the membrane. The helical transmembrane segment at 306–326 (VTPIYYVFFTSMVVTCSAILF) threads the bilayer. Residues 327 to 336 (QEWYGMTAGD) are Extracellular-facing. Residues 337 to 357 (IIGTLSGFFTIIIGIFLLHAF) form a helical membrane-spanning segment. At 358–410 (KNTDITWSELTSTAKKEAVSLNVNENNYVLLENLECSAPGYNDDVTLFSRTDD) the chain is on the cytoplasmic side.

This sequence belongs to the NIPA family. As to expression, expressed in the pancreatic islets.

It is found in the golgi apparatus membrane. It carries out the reaction Mg(2+)(in) = Mg(2+)(out). Acts as a Mg(2+) transporter. Can also transport other divalent cations such as Fe(2+), Sr(2+), Ba(2+), Mn(2+), Cu(2+) and Co(2+) but to a much less extent than Mg(2+). In Homo sapiens (Human), this protein is Magnesium transporter NIPA3 (NIPAL1).